Here is an 86-residue protein sequence, read N- to C-terminus: Small ribosomal subunit protein bS20 (86 aa).

The segment covering 1–18 has biased composition (basic and acidic residues); sequence MANIKSQEKRIRTNERAR. The segment at 1 to 25 is disordered; that stretch reads MANIKSQEKRIRTNERARLRNQATK.

The protein belongs to the bacterial ribosomal protein bS20 family.

In terms of biological role, binds directly to 16S ribosomal RNA. This is Small ribosomal subunit protein bS20 from Mycobacteroides abscessus (strain ATCC 19977 / DSM 44196 / CCUG 20993 / CIP 104536 / JCM 13569 / NCTC 13031 / TMC 1543 / L948) (Mycobacterium abscessus).